A 456-amino-acid polypeptide reads, in one-letter code: Glutamate--tRNA ligase 2 (456 aa).

The 'HIGH' region signature appears at 8-18 (PSPTGYIHIGN). Positions 249–253 (GLSKR) match the 'KMSKS' region motif. Residue Lys252 participates in ATP binding.

This sequence belongs to the class-I aminoacyl-tRNA synthetase family. Glutamate--tRNA ligase type 1 subfamily. As to quaternary structure, monomer.

Its subcellular location is the cytoplasm. The catalysed reaction is tRNA(Glu) + L-glutamate + ATP = L-glutamyl-tRNA(Glu) + AMP + diphosphate. Its function is as follows. Catalyzes the attachment of glutamate to tRNA(Glu) in a two-step reaction: glutamate is first activated by ATP to form Glu-AMP and then transferred to the acceptor end of tRNA(Glu). The sequence is that of Glutamate--tRNA ligase 2 from Bartonella bacilliformis (strain ATCC 35685 / KC583 / Herrer 020/F12,63).